A 634-amino-acid polypeptide reads, in one-letter code: 1-deoxy-D-xylulose-5-phosphate synthase (634 aa).

Thiamine diphosphate contacts are provided by residues H74 and 115 to 117; that span reads AHS. D146 contributes to the Mg(2+) binding site. Thiamine diphosphate contacts are provided by residues 147 to 148, N176, Y283, and E365; that span reads GA. A Mg(2+)-binding site is contributed by N176.

The protein belongs to the transketolase family. DXPS subfamily. In terms of assembly, homodimer. Mg(2+) serves as cofactor. Requires thiamine diphosphate as cofactor.

It carries out the reaction D-glyceraldehyde 3-phosphate + pyruvate + H(+) = 1-deoxy-D-xylulose 5-phosphate + CO2. It participates in metabolic intermediate biosynthesis; 1-deoxy-D-xylulose 5-phosphate biosynthesis; 1-deoxy-D-xylulose 5-phosphate from D-glyceraldehyde 3-phosphate and pyruvate: step 1/1. In terms of biological role, catalyzes the acyloin condensation reaction between C atoms 2 and 3 of pyruvate and glyceraldehyde 3-phosphate to yield 1-deoxy-D-xylulose-5-phosphate (DXP). The chain is 1-deoxy-D-xylulose-5-phosphate synthase from Burkholderia thailandensis (strain ATCC 700388 / DSM 13276 / CCUG 48851 / CIP 106301 / E264).